A 356-amino-acid chain; its full sequence is Tyrosine recombinase XerS (356 aa).

One can recognise a Core-binding (CB) domain in the interval 16 to 121; sequence LMPWYVLEYY…ALSSLYKYLT (106 aa). In terms of domain architecture, Tyr recombinase spans 169–354; that stretch reads GFLTYIDQEH…VNDEQKNALD (186 aa). Active-site residues include Arg-210, Lys-234, His-306, Arg-309, and His-332. The O-(3'-phospho-DNA)-tyrosine intermediate role is filled by Tyr-341.

This sequence belongs to the 'phage' integrase family. XerS subfamily.

It is found in the cytoplasm. With respect to regulation, ftsK is required for recombination. Its function is as follows. Site-specific tyrosine recombinase, which acts by catalyzing the cutting and rejoining of the recombining DNA molecules. Essential to convert dimers of the bacterial chromosome into monomers to permit their segregation at cell division. The polypeptide is Tyrosine recombinase XerS (Streptococcus pneumoniae serotype 19F (strain G54)).